A 241-amino-acid polypeptide reads, in one-letter code: Uridylate kinase (241 aa).

Position 12–15 (12–15) interacts with ATP; sequence KLSG. The interval 20–25 is involved in allosteric activation by GTP; it reads GDKGQG. Gly-54 is a binding site for UMP. Residues Gly-55 and Arg-59 each contribute to the ATP site. UMP-binding positions include Asp-74 and 135–142; that span reads TGSPYFST. ATP contacts are provided by Asn-163, Tyr-169, and Asp-172.

This sequence belongs to the UMP kinase family. Homohexamer.

The protein resides in the cytoplasm. The catalysed reaction is UMP + ATP = UDP + ADP. It participates in pyrimidine metabolism; CTP biosynthesis via de novo pathway; UDP from UMP (UMPK route): step 1/1. With respect to regulation, allosterically activated by GTP. Inhibited by UTP. Catalyzes the reversible phosphorylation of UMP to UDP. The sequence is that of Uridylate kinase from Leuconostoc mesenteroides subsp. mesenteroides (strain ATCC 8293 / DSM 20343 / BCRC 11652 / CCM 1803 / JCM 6124 / NCDO 523 / NBRC 100496 / NCIMB 8023 / NCTC 12954 / NRRL B-1118 / 37Y).